The chain runs to 367 residues: Anhydro-N-acetylmuramic acid kinase (367 aa).

ATP is bound at residue 13-20 (GTSMDGAD).

The protein belongs to the anhydro-N-acetylmuramic acid kinase family.

The enzyme catalyses 1,6-anhydro-N-acetyl-beta-muramate + ATP + H2O = N-acetyl-D-muramate 6-phosphate + ADP + H(+). It participates in amino-sugar metabolism; 1,6-anhydro-N-acetylmuramate degradation. The protein operates within cell wall biogenesis; peptidoglycan recycling. Catalyzes the specific phosphorylation of 1,6-anhydro-N-acetylmuramic acid (anhMurNAc) with the simultaneous cleavage of the 1,6-anhydro ring, generating MurNAc-6-P. Is required for the utilization of anhMurNAc either imported from the medium or derived from its own cell wall murein, and thus plays a role in cell wall recycling. This is Anhydro-N-acetylmuramic acid kinase from Neisseria gonorrhoeae (strain ATCC 700825 / FA 1090).